A 595-amino-acid polypeptide reads, in one-letter code: Sialic acid-binding Ig-like lectin 12 (595 aa).

The signal sequence occupies residues 1 to 18 (MLLLLLLLPPLLCGRVGA). Ig-like V-type domains follow at residues 19-142 (KEQK…VNVT) and 143-269 (ASQD…VHVT). Over 19–481 (KEQKDYLLTM…RPISGVTLGA (463 aa)) the chain is Extracellular. Residues C44 and C104 are joined by a disulfide bond. 4 N-linked (GlcNAc...) asparagine glycosylation sites follow: N140, N179, N230, and N290. 3 disulfides stabilise this stretch: C166-C299, C171-C231, and C293-C342. The Ig-like C2-type 1 domain occupies 275 to 358 (PTFSIPGTLE…AGVTMTRAVR (84 aa)). 3 N-linked (GlcNAc...) asparagine glycosylation sites follow: N360, N367, and N385. Residues 365–462 (PQNLTMTVFQ…GSQHISLSLS (98 aa)) enclose the Ig-like C2-type 2 domain. A disulfide bridge links C401 with C446. The helical transmembrane segment at 482-502 (FGGAGATALVFLYFCIIFVVV) threads the bilayer. Over 503 to 595 (RSCRKKSARP…YEYSEINIPK (93 aa)) the chain is Cytoplasmic. Residues 512–560 (PAVGVGDTGMEDANAVRGSASQGPLIESPADDSPPHHAPPALATPSPEE) form a disordered region. The short motif at 563-568 (IQYASL) is the ITIM motif element. Residues Y565 and Y588 each carry the phosphotyrosine modification. Positions 586-591 (YEYSEI) match the SLAM-like motif motif.

Belongs to the immunoglobulin superfamily. SIGLEC (sialic acid binding Ig-like lectin) family. As to expression, isoform Short is highly expressed in spleen, small intestine and adrenal gland; it is lower expressed in thyroid, placenta, brain, stomach, bone marrow, spinal cord and breast. Isoform Long is highly expressed in spleen, small intestine and bone marrow; it is lower expressed in thyroid, placenta, thymus, trachea, stomach, lung, adrenal gland, fetal brain and testis.

It is found in the membrane. Its function is as follows. Putative adhesion molecule that mediates sialic-acid dependent binding to cells. The sialic acid recognition site may be masked by cis interactions with sialic acids on the same cell surface. The protein is Sialic acid-binding Ig-like lectin 12 (SIGLEC12) of Homo sapiens (Human).